A 154-amino-acid polypeptide reads, in one-letter code: Xanthine-guanine phosphoribosyltransferase (154 aa).

Residues 37-38 (RG) and 90-98 (DDLVDTGNT) contribute to the 5-phospho-alpha-D-ribose 1-diphosphate site. Asp91 lines the Mg(2+) pocket. Asp94 and Ile137 together coordinate guanine. Asp94 and Ile137 together coordinate xanthine. Residues 94 to 98 (DTGNT) and 136 to 137 (WI) each bind GMP.

This sequence belongs to the purine/pyrimidine phosphoribosyltransferase family. XGPT subfamily. In terms of assembly, homotetramer. Requires Mg(2+) as cofactor.

The protein resides in the cell inner membrane. It carries out the reaction GMP + diphosphate = guanine + 5-phospho-alpha-D-ribose 1-diphosphate. The enzyme catalyses XMP + diphosphate = xanthine + 5-phospho-alpha-D-ribose 1-diphosphate. It catalyses the reaction IMP + diphosphate = hypoxanthine + 5-phospho-alpha-D-ribose 1-diphosphate. It functions in the pathway purine metabolism; GMP biosynthesis via salvage pathway; GMP from guanine: step 1/1. The protein operates within purine metabolism; XMP biosynthesis via salvage pathway; XMP from xanthine: step 1/1. Functionally, purine salvage pathway enzyme that catalyzes the transfer of the ribosyl-5-phosphate group from 5-phospho-alpha-D-ribose 1-diphosphate (PRPP) to the N9 position of the 6-oxopurines guanine and xanthine to form the corresponding ribonucleotides GMP (guanosine 5'-monophosphate) and XMP (xanthosine 5'-monophosphate), with the release of PPi. To a lesser extent, also acts on hypoxanthine. This chain is Xanthine-guanine phosphoribosyltransferase, found in Histophilus somni (strain 129Pt) (Haemophilus somnus).